The sequence spans 151 residues: Large ribosomal subunit protein eL19 (151 aa).

Positions 57–81 are enriched in basic residues; that stretch reads KKGISSARVKKLKEQRKKGRRRGPG. A disordered region spans residues 57 to 95; it reads KKGISSARVKKLKEQRKKGRRRGPGSRRGAAGARTPPKE.

Belongs to the eukaryotic ribosomal protein eL19 family. As to quaternary structure, part of the 50S ribosomal subunit.

In terms of biological role, binds to the 23S rRNA. The protein is Large ribosomal subunit protein eL19 of Methanocaldococcus jannaschii (strain ATCC 43067 / DSM 2661 / JAL-1 / JCM 10045 / NBRC 100440) (Methanococcus jannaschii).